Here is a 492-residue protein sequence, read N- to C-terminus: Glutamyl-tRNA(Gln) amidotransferase subunit A (492 aa).

Catalysis depends on charge relay system residues Lys-78 and Ser-158. Ser-182 acts as the Acyl-ester intermediate in catalysis.

Belongs to the amidase family. GatA subfamily. In terms of assembly, heterotrimer of A, B and C subunits.

The enzyme catalyses L-glutamyl-tRNA(Gln) + L-glutamine + ATP + H2O = L-glutaminyl-tRNA(Gln) + L-glutamate + ADP + phosphate + H(+). Allows the formation of correctly charged Gln-tRNA(Gln) through the transamidation of misacylated Glu-tRNA(Gln) in organisms which lack glutaminyl-tRNA synthetase. The reaction takes place in the presence of glutamine and ATP through an activated gamma-phospho-Glu-tRNA(Gln). This Zymomonas mobilis subsp. mobilis (strain ATCC 31821 / ZM4 / CP4) protein is Glutamyl-tRNA(Gln) amidotransferase subunit A.